A 211-amino-acid chain; its full sequence is Testis-expressed protein 35 (211 aa).

Positions 47-111 form a coiled coil; that stretch reads GGTKELKNEL…MDVLINIQKN (65 aa).

This is Testis-expressed protein 35 (Tex35) from Bos taurus (Bovine).